The primary structure comprises 670 residues: ATP synthase subunit alpha 2 (670 aa).

180–187 provides a ligand contact to ATP; sequence GDRATGKT. The tract at residues 527–670 is disordered; it reads AEDAAGDIGG…DAEAEARHKR (144 aa). Over residues 543–588 the composition is skewed to basic and acidic residues; that stretch reads ARGDADRDADHGANREVSREVSPEASREVSREVSREVSHEADRDAA. The segment covering 589–599 has biased composition (low complexity); the sequence is ADAARVAGRAP. Positions 621–639 are enriched in basic and acidic residues; the sequence is ADGDRASASRPRPDARGDA. The segment covering 640–661 has biased composition (low complexity); the sequence is ARTAPSPQGGAEVNVNAAANVD.

The protein belongs to the ATPase alpha/beta chains family. F-type ATPases have 2 components, CF(1) - the catalytic core - and CF(0) - the membrane proton channel. CF(1) has five subunits: alpha(3), beta(3), gamma(1), delta(1), epsilon(1). CF(0) has three main subunits: a(1), b(2) and c(9-12). The alpha and beta chains form an alternating ring which encloses part of the gamma chain. CF(1) is attached to CF(0) by a central stalk formed by the gamma and epsilon chains, while a peripheral stalk is formed by the delta and b chains.

The protein localises to the cell inner membrane. The catalysed reaction is ATP + H2O + 4 H(+)(in) = ADP + phosphate + 5 H(+)(out). In terms of biological role, produces ATP from ADP in the presence of a proton gradient across the membrane. The alpha chain is a regulatory subunit. In Burkholderia pseudomallei (strain 668), this protein is ATP synthase subunit alpha 2.